Here is a 204-residue protein sequence, read N- to C-terminus: ATP phosphoribosyltransferase (204 aa).

Belongs to the ATP phosphoribosyltransferase family. Short subfamily.

It is found in the cytoplasm. It catalyses the reaction 1-(5-phospho-beta-D-ribosyl)-ATP + diphosphate = 5-phospho-alpha-D-ribose 1-diphosphate + ATP. It participates in amino-acid biosynthesis; L-histidine biosynthesis; L-histidine from 5-phospho-alpha-D-ribose 1-diphosphate: step 1/9. Its function is as follows. Catalyzes the condensation of ATP and 5-phosphoribose 1-diphosphate to form N'-(5'-phosphoribosyl)-ATP (PR-ATP). Has a crucial role in the pathway because the rate of histidine biosynthesis seems to be controlled primarily by regulation of HisG enzymatic activity. This Pyrococcus furiosus (strain ATCC 43587 / DSM 3638 / JCM 8422 / Vc1) protein is ATP phosphoribosyltransferase (hisG).